An 840-amino-acid chain; its full sequence is Heat shock 70 kDa protein 4 (840 aa).

Lys53 is modified (N6-acetyllysine). At Ser76 the chain carries Phosphoserine. 2 positions are modified to phosphotyrosine: Tyr89 and Tyr336. Ser393 and Ser415 each carry phosphoserine. Lys430 is modified (N6-acetyllysine). The disordered stretch occupies residues 506-575; sequence NEEPMETDQN…QAKKAKVKTS (70 aa). Positions 514–533 are enriched in basic and acidic residues; that stretch reads QNAKEEEKMQVDQEEPHAEE. A Phosphothreonine modification is found at Thr538. Ser546 and Ser647 each carry phosphoserine. The residue at position 660 (Tyr660) is a Phosphotyrosine. Lys679 is subject to N6-acetyllysine. Ser756 carries the post-translational modification Phosphoserine. Position 773 is an N6-methyllysine (Lys773). Residues 782-840 are disordered; sequence IISKPKPKVEPPKEEQKNAEQNGPVDGQGDSPGPQAAEQGTDTAVPSDSDKKLPEMDID. Basic and acidic residues-rich tracts occupy residues 788–799 and 829–840; these read PKVEPPKEEQKN and DSDKKLPEMDID.

It belongs to the heat shock protein 70 family. In terms of assembly, interacts with TJP1/ZO-1.

It localises to the cytoplasm. The chain is Heat shock 70 kDa protein 4 (HSPA4) from Canis lupus familiaris (Dog).